A 365-amino-acid polypeptide reads, in one-letter code: Putative F-box protein At1g31000 (365 aa).

The 48-residue stretch at 15 to 62 (NDSDSVRIDIVIEIVKRLPLKDVSRFLLVSKLWSEIIRSPYFIRSFPF) folds into the F-box domain.

This chain is Putative F-box protein At1g31000, found in Arabidopsis thaliana (Mouse-ear cress).